Reading from the N-terminus, the 114-residue chain is DNA-directed RNA polymerase subunit Rpo4 (114 aa).

This sequence belongs to the eukaryotic RPB4 RNA polymerase subunit family. In terms of assembly, part of the 13-subunit RNA polymerase complex. Forms a stalk with Rpo7 that extends from the main structure. In purified enzyme appears as 5 forms, each differing by about 200 Da of a covalently bound, negatively charged residue. Not glycosylated.

It localises to the cytoplasm. The enzyme catalyses RNA(n) + a ribonucleoside 5'-triphosphate = RNA(n+1) + diphosphate. Its function is as follows. DNA-dependent RNA polymerase catalyzes the transcription of DNA into RNA using the four ribonucleoside triphosphates as substrates. This subunit is less well bound than the others. Probably not involved in transcription initiation. The chain is DNA-directed RNA polymerase subunit Rpo4 from Sulfolobus acidocaldarius (strain ATCC 33909 / DSM 639 / JCM 8929 / NBRC 15157 / NCIMB 11770).